The following is a 240-amino-acid chain: Uridylate kinase (240 aa).

Residue 12 to 15 (KLSG) coordinates ATP. An involved in allosteric activation by GTP region spans residues 20–25 (GEDGFG). Gly54 lines the UMP pocket. ATP is bound by residues Gly55 and Arg59. Residues Asp74 and 135-142 (TGNPYFST) contribute to the UMP site. Asn163, Tyr169, and Asp172 together coordinate ATP.

This sequence belongs to the UMP kinase family. In terms of assembly, homohexamer.

It is found in the cytoplasm. The catalysed reaction is UMP + ATP = UDP + ADP. It functions in the pathway pyrimidine metabolism; CTP biosynthesis via de novo pathway; UDP from UMP (UMPK route): step 1/1. Allosterically activated by GTP. Probably inhibited by UTP. Catalyzes the reversible phosphorylation of UMP to UDP. This chain is Uridylate kinase (pyrH), found in Enterococcus faecalis (strain ATCC 700802 / V583).